Consider the following 397-residue polypeptide: Penicillopepsin-1 (397 aa).

Residues 1–20 (MVVFSQVTVALTCFSAIASA) form the signal peptide. A propeptide spans 21–71 (AAVRQEPPQGFTVNQVQKAVPGTRTVNLPGLYANALVKYGATVPATVHAAA) (activation peptide). Positions 87 to 394 (YLTPVTIGSS…DSEGPRLGFA (308 aa)) constitute a Peptidase A1 domain. Residues Asp-103 and Asp-285 contribute to the active site. Residue Asn-311 is glycosylated (N-linked (GlcNAc...) asparagine). A disulfide bond links Cys-322 and Cys-357.

This sequence belongs to the peptidase A1 family. In terms of assembly, monomer.

Its subcellular location is the secreted. The catalysed reaction is Hydrolysis of proteins with broad specificity similar to that of pepsin A, preferring hydrophobic residues at P1 and P1', but also cleaving 20-Gly-|-Glu-21 in the B chain of insulin. Clots milk, and activates trypsinogen.. Secreted aspartic endopeptidase that allows assimilation of proteinaceous substrates. The scissile peptide bond is attacked by a nucleophilic water molecule activated by two aspartic residues in the active site. Shows a broad primary substrate specificity. Favors hydrophobic residues at the P1 and P1' positions, but can also activate trypsinogen and hydrolyze the B chain of insulin between positions 'Gly-20' and 'Glu-21'. This is Penicillopepsin-1 from Penicillium roqueforti.